We begin with the raw amino-acid sequence, 259 residues long: Insulin-like growth factor-binding protein 1 (259 aa).

The first 25 residues, 1-25, serve as a signal peptide directing secretion; the sequence is MSEVPVARVWLVLLLLTVQVGVTAG. The IGFBP N-terminal domain occupies 26-107; it reads APWQCAPCSA…TRGQGACVQE (82 aa). Intrachain disulfides connect C30-C57, C33-C59, C41-C60, C48-C63, C71-C84, and C78-C104. S45 is subject to Phosphoserine; by FAM20C. Phosphoserine is present on residues S120, S123, S126, and S144. A Phosphoserine; by FAM20C modification is found at S156. Phosphothreonine; by FAM20C is present on T157. Y158 is modified (phosphotyrosine). The Thyroglobulin type-1 domain occupies 173 to 251; the sequence is KEPCRIELYR…SPEIRGDPNC (79 aa). 3 disulfide bridges follow: C176–C206, C217–C228, and C230–C251. The residue at position 193 (T193) is a Phosphothreonine; by FAM20C. A phosphoserine; by FAM20C mark is found at S194 and S199. A Phosphoserine; by FAM20C modification is found at S242. The short motif at 246-248 is the Cell attachment site element; that stretch reads RGD.

As to quaternary structure, binds equally well IGF1 and IGF2. Interacts with integrin ITGA5:ITGB1. Interacts with VHL; this interaction inhibits HIF1A degradation. Phosphorylated; probably by casein kinase II. Phosphorylation alters the affinity of the protein for IGFs. In amniotic fluid, the unmodified protein is the most abundant form, while mono-, bi-, tri- and tetraphosphorylated forms are present in decreasing amounts. The phosphorylation state may influence the propensity to proteolysis.

The protein resides in the secreted. In terms of biological role, multifunctional protein that plays a critical role in regulating the availability of IGFs such as IGF1 and IGF2 to their receptors and thereby regulates IGF-mediated cellular processes including cell migration, proliferation, differentiation or apoptosis in a cell-type specific manner. Also plays a positive role in cell migration by interacting with integrin ITGA5:ITGB1 through its RGD motif. Mechanistically, binding to integrins leads to activation of focal adhesion kinase/PTK2 and stimulation of the mitogen-activated protein kinase (MAPK) pathway. Regulates cardiomyocyte apoptosis by suppressing HIF-1alpha/HIF1A ubiquitination and subsequent degradation. The chain is Insulin-like growth factor-binding protein 1 (IGFBP1) from Homo sapiens (Human).